Consider the following 611-residue polypeptide: Chaperonin 60 subunit beta 4, chloroplastic (611 aa).

A chloroplast-targeting transit peptide spans 1–37; it reads MAFSQAALSALPLSDRTFRKKPSSSSSSSPNFVLRVR. A coiled-coil region spans residues 377 to 480; that stretch reads QKAVDERVSQ…LDNTEQKIGA (104 aa). The disordered stretch occupies residues 574–595; that stretch reads INPPLPTSSPATSSMFPDRKLP.

It belongs to the chaperonin (HSP60) family. In terms of assembly, part of the Cpn60 complex composed of 7 alpha and 7 beta subunits. Can also form a complex composed of 14 beta subunits only. Both complexes show ATPase activity. The Cpn60 complex interacts with the Cpn10 complex. Interacts with NDHH.

The protein localises to the plastid. Its subcellular location is the chloroplast stroma. Its function is as follows. Involved specifically in the folding of NDHH, a subunit of the chloroplast NADH dehydrogenase-like complex (NDH). The sequence is that of Chaperonin 60 subunit beta 4, chloroplastic (CPN60B4) from Arabidopsis thaliana (Mouse-ear cress).